Here is a 173-residue protein sequence, read N- to C-terminus: Shikimate kinase 1 (173 aa).

14-19 (GAGKST) lines the ATP pocket. Ser18 serves as a coordination point for Mg(2+). Residues Asp36, Arg60, and Gly82 each coordinate substrate. Arg120 is an ATP binding site. Arg140 is a binding site for substrate. Gln157 contributes to the ATP binding site.

This sequence belongs to the shikimate kinase family. In terms of assembly, monomer. Mg(2+) serves as cofactor.

The protein localises to the cytoplasm. The catalysed reaction is shikimate + ATP = 3-phosphoshikimate + ADP + H(+). Its pathway is metabolic intermediate biosynthesis; chorismate biosynthesis; chorismate from D-erythrose 4-phosphate and phosphoenolpyruvate: step 5/7. Functionally, catalyzes the specific phosphorylation of the 3-hydroxyl group of shikimic acid using ATP as a cosubstrate. The sequence is that of Shikimate kinase 1 from Erwinia tasmaniensis (strain DSM 17950 / CFBP 7177 / CIP 109463 / NCPPB 4357 / Et1/99).